The primary structure comprises 237 residues: Ubiquinone/menaquinone biosynthesis C-methyltransferase UbiE (237 aa).

2 residues coordinate S-adenosyl-L-methionine: Thr-60 and Asp-80.

It belongs to the class I-like SAM-binding methyltransferase superfamily. MenG/UbiE family.

The catalysed reaction is a 2-demethylmenaquinol + S-adenosyl-L-methionine = a menaquinol + S-adenosyl-L-homocysteine + H(+). It catalyses the reaction a 2-methoxy-6-(all-trans-polyprenyl)benzene-1,4-diol + S-adenosyl-L-methionine = a 5-methoxy-2-methyl-3-(all-trans-polyprenyl)benzene-1,4-diol + S-adenosyl-L-homocysteine + H(+). The protein operates within quinol/quinone metabolism; menaquinone biosynthesis; menaquinol from 1,4-dihydroxy-2-naphthoate: step 2/2. Its pathway is cofactor biosynthesis; ubiquinone biosynthesis. Its function is as follows. Methyltransferase required for the conversion of demethylmenaquinol (DMKH2) to menaquinol (MKH2) and the conversion of 2-polyprenyl-6-methoxy-1,4-benzoquinol (DDMQH2) to 2-polyprenyl-3-methyl-6-methoxy-1,4-benzoquinol (DMQH2). This Syntrophotalea carbinolica (strain DSM 2380 / NBRC 103641 / GraBd1) (Pelobacter carbinolicus) protein is Ubiquinone/menaquinone biosynthesis C-methyltransferase UbiE.